The primary structure comprises 1025 residues: Multidrug resistance protein MdtC (1025 aa).

12 consecutive transmembrane segments (helical) span residues 3-23, 333-353, 360-380, 387-407, 431-451, 463-483, 528-548, 853-873, 875-895, 897-917, 953-973, and 984-1004; these read FFAL…AITL, EVEQ…FLFL, IIPA…MYLC, LSLM…IVVL, VGFT…PLLL, FAVT…TLTP, LVGM…ISIP, VILI…LYES, VHPL…LLAL, LFNA…IGIV, PIMM…LSGG, and ITIV…TPVV.

It belongs to the resistance-nodulation-cell division (RND) (TC 2.A.6) family. MdtC subfamily. As to quaternary structure, part of a tripartite efflux system composed of MdtA, MdtB and MdtC. MdtC forms a heteromultimer with MdtB.

The protein localises to the cell inner membrane. In terms of biological role, the MdtABC tripartite complex confers resistance against novobiocin and deoxycholate. The chain is Multidrug resistance protein MdtC from Escherichia coli O157:H7 (strain EC4115 / EHEC).